The chain runs to 301 residues: Putative F-box/LRR-repeat protein 19 (301 aa).

The 49-residue stretch at 18–66 (PDWSELTRECLLDIFSRLSQEQRWIGPMLVSKNWMNACYDPTLNTIFDL) folds into the F-box domain. LRR repeat units follow at residues 108–133 (IRHC…WIKN), 134–159 (CPNV…DISY), 160–185 (SYGI…KRNL), 231–256 (YSTL…DLRG), and 257–282 (CISL…IKPD).

This chain is Putative F-box/LRR-repeat protein 19 (FBL19), found in Arabidopsis thaliana (Mouse-ear cress).